The sequence spans 185 residues: Ribosome-recycling factor (185 aa).

The protein belongs to the RRF family.

It localises to the cytoplasm. Responsible for the release of ribosomes from messenger RNA at the termination of protein biosynthesis. May increase the efficiency of translation by recycling ribosomes from one round of translation to another. The polypeptide is Ribosome-recycling factor (Shewanella sediminis (strain HAW-EB3)).